Reading from the N-terminus, the 424-residue chain is Serine--tRNA ligase (424 aa).

L-serine is bound at residue 233 to 235 (TAE). 264–266 (RRE) contributes to the ATP binding site. Residue glutamate 287 coordinates L-serine. 351–354 (EISS) is an ATP binding site. Position 387 (serine 387) interacts with L-serine.

It belongs to the class-II aminoacyl-tRNA synthetase family. Type-1 seryl-tRNA synthetase subfamily. In terms of assembly, homodimer. The tRNA molecule binds across the dimer.

The protein localises to the cytoplasm. It carries out the reaction tRNA(Ser) + L-serine + ATP = L-seryl-tRNA(Ser) + AMP + diphosphate + H(+). The catalysed reaction is tRNA(Sec) + L-serine + ATP = L-seryl-tRNA(Sec) + AMP + diphosphate + H(+). It functions in the pathway aminoacyl-tRNA biosynthesis; selenocysteinyl-tRNA(Sec) biosynthesis; L-seryl-tRNA(Sec) from L-serine and tRNA(Sec): step 1/1. Catalyzes the attachment of serine to tRNA(Ser). Is also able to aminoacylate tRNA(Sec) with serine, to form the misacylated tRNA L-seryl-tRNA(Sec), which will be further converted into selenocysteinyl-tRNA(Sec). This Cyanothece sp. (strain PCC 7425 / ATCC 29141) protein is Serine--tRNA ligase.